The chain runs to 304 residues: N-acetylmuramic acid 6-phosphate etherase (304 aa).

One can recognise an SIS domain in the interval 57–220 (AVKGLSAGGR…STATMVGLGK (164 aa)). Residue Glu85 is the Proton donor of the active site. Glu116 is a catalytic residue.

It belongs to the GCKR-like family. MurNAc-6-P etherase subfamily. As to quaternary structure, homodimer.

The catalysed reaction is N-acetyl-D-muramate 6-phosphate + H2O = N-acetyl-D-glucosamine 6-phosphate + (R)-lactate. Its pathway is amino-sugar metabolism; N-acetylmuramate degradation. In terms of biological role, specifically catalyzes the cleavage of the D-lactyl ether substituent of MurNAc 6-phosphate, producing GlcNAc 6-phosphate and D-lactate. The protein is N-acetylmuramic acid 6-phosphate etherase of Cutibacterium acnes (strain DSM 16379 / KPA171202) (Propionibacterium acnes).